Reading from the N-terminus, the 495-residue chain is MFVNFKYFSFFIRTKMDGVTGGGTNIGEAVTAPPPRNPHPATLLNANSLPPPFLSKTYDMVEDPATDAIVSWSPTNNSFIVWDPPEFSRDLLPKYFKHNNFSSFVRQLNTYGFRKVDPDRWEFANEGFLRGQKHLLKKISRRKSVQGHGSSSSNPQSQQLSQGQGSMAALSSCVEVGKFGLEEEVEQLKRDKNVLMQELVKLRQQQQTTDNKLQVLVKHLQVMEQRQQQIMSFLAKAVQNPTFLSQFIQKQTDSNMHVTEANKKRRLREDSTAATESNSHSHSLEASDGQIVKYQPLRNDSMMWNMMKTDDKYPFLDGFSSPNQVSGVTLQEVLPITSGQSQAYASVPSGQPLSYLPSTSTSLPDTIMPETSQIPQLTRESINDFPTENFMDTEKNVPEAFISPSPFLDGGSVPIQLEGIPEDPEIDELMSNFEFLEEYMPESPVFGDATTLENNNNNNNNNNNNNNNNNNNNTNGRHMDKLIEELGLLTSETEH.

A DNA-binding region spans residues 50-144; that stretch reads PPPFLSKTYD…LLKKISRRKS (95 aa). A disordered region spans residues 140-164; that stretch reads SRRKSVQGHGSSSSNPQSQQLSQGQ. Residues 146–164 show a composition bias toward low complexity; that stretch reads QGHGSSSSNPQSQQLSQGQ. Residues 172-238 are hydrophobic repeat HR-A/B; sequence SCVEVGKFGL…QIMSFLAKAV (67 aa). Residues 255 to 288 are disordered; it reads NMHVTEANKKRRLREDSTAATESNSHSHSLEASD. A Nuclear localization signal motif is present at residues 262–268; that stretch reads NKKRRLR. The span at 272–281 shows a compositional bias: polar residues; the sequence is TAATESNSHS. Residues 433 to 442 carry the AHA motif; the sequence is FEFLEEYMPE. Residues 445 to 477 are disordered; that stretch reads VFGDATTLENNNNNNNNNNNNNNNNNNNNTNGR. Residues 454–473 are compositionally biased toward low complexity; the sequence is NNNNNNNNNNNNNNNNNNNN. The short motif at 482–489 is the Nuclear export signal element; sequence LIEELGLL.

The protein belongs to the HSF family. Class A subfamily. As to quaternary structure, homotrimer. Interacts with HSP70-1 and HSP70-4. Binds to CRK1. Binds to HSBP. Post-translationally, exhibits temperature-dependent phosphorylation. Phosphorylated by CRK1. In terms of tissue distribution, constitutively expressed.

Its subcellular location is the cytoplasm. The protein resides in the nucleus. Transcriptional activator that specifically binds DNA sequence 5'-AGAAnnTTCT-3' known as heat shock promoter elements (HSE). The chain is Heat stress transcription factor A-1a (HSFA1A) from Arabidopsis thaliana (Mouse-ear cress).